Here is a 264-residue protein sequence, read N- to C-terminus: Phosphoinositide-3-kinase-interacting protein 1 (264 aa).

Positions 1–21 are cleaved as a signal peptide; it reads MLLAWVHTFLLSNMLLAEAYG. Residues 22 to 170 lie on the Extracellular side of the membrane; that stretch reads SGGCFWDNGH…SKEKKDLGTL (149 aa). The Kringle domain occupies 24-101; the sequence is GCFWDNGHLY…EKRPCEDVSC (78 aa). 3 disulfides stabilise this stretch: cysteine 25–cysteine 101, cysteine 46–cysteine 82, and cysteine 70–cysteine 96. The segment at 94–129 is disordered; the sequence is RPCEDVSCPETTSQAPPPSSAMELEEKSGAPGDKEA. Residues 117–129 show a composition bias toward basic and acidic residues; sequence LEEKSGAPGDKEA. Residues 171-191 form a helical membrane-spanning segment; the sequence is GYVLGITMMVIILAIGAGIIV. The Cytoplasmic segment spans residues 192 to 264; it reads GYTYKRGKDL…LTGQAGTPGA (73 aa).

The protein localises to the cell membrane. Its function is as follows. Negative regulator of hepatic phosphatidylinositol 3-kinase (PI3K) activity. This is Phosphoinositide-3-kinase-interacting protein 1 (Pik3ip1) from Mus musculus (Mouse).